Reading from the N-terminus, the 418-residue chain is Hydroxysqualene dehydroxylase (418 aa).

The protein belongs to the HpnE family.

It carries out the reaction squalene + FAD + H2O + H(+) = hydroxysqualene + FADH2. The protein operates within secondary metabolite biosynthesis; hopanoid biosynthesis. Involved in the biosynthesis of the hopanoid precursor squalene (SQ) from farnesyl diphosphate (FPP). Catalyzes the third (last) step, the reduction of hydroxysqualene (HSQ) to SQ. The polypeptide is Hydroxysqualene dehydroxylase (Rhodopseudomonas palustris (strain ATCC BAA-98 / CGA009)).